We begin with the raw amino-acid sequence, 145 residues long: Deoxyuridine 5'-triphosphate nucleotidohydrolase (145 aa).

Substrate is bound by residues 63-65 (RSG), N76, 80-82 (TID), and K90.

It belongs to the dUTPase family. It depends on Mg(2+) as a cofactor.

The enzyme catalyses dUTP + H2O = dUMP + diphosphate + H(+). Its pathway is pyrimidine metabolism; dUMP biosynthesis; dUMP from dCTP (dUTP route): step 2/2. In terms of biological role, this enzyme is involved in nucleotide metabolism: it produces dUMP, the immediate precursor of thymidine nucleotides and it decreases the intracellular concentration of dUTP so that uracil cannot be incorporated into DNA. The chain is Deoxyuridine 5'-triphosphate nucleotidohydrolase from Clostridium acetobutylicum (strain ATCC 824 / DSM 792 / JCM 1419 / IAM 19013 / LMG 5710 / NBRC 13948 / NRRL B-527 / VKM B-1787 / 2291 / W).